We begin with the raw amino-acid sequence, 67 residues long: LPS-assembly lipoprotein LptM (67 aa).

The first 19 residues, 1-19, serve as a signal peptide directing secretion; sequence MKNVFKTLAVLLTLFSLTG. Cys-20 carries N-palmitoyl cysteine lipidation. Cys-20 carries the S-diacylglycerol cysteine lipid modification. A disordered region spans residues 26–67; sequence LYFPPADKNAPPPTKKVDSQTQSTMPDKNDRATGDGPSQVNY.

The protein belongs to the LptM family. Interacts with the outer membrane embedded portion of the LPS translocon formed by LptD and LptE (LptDE).

The protein localises to the cell outer membrane. Its function is as follows. Component of the lipopolysaccharide (LPS) transport (Lpt) pathway that promotes efficient assembly of the outer membrane LPS translocon (LptDE) by the BAM complex. Facilitates oxidative maturation of LptD by stabilizing a conformation of the LPS translocon in which LptD can efficiently acquire native disulfide bonds, thereby activating the LPS translocon. The sequence is that of LPS-assembly lipoprotein LptM from Salmonella typhi.